Here is a 200-residue protein sequence, read N- to C-terminus: 3-isopropylmalate dehydratase small subunit (200 aa).

Belongs to the LeuD family. LeuD type 1 subfamily. As to quaternary structure, heterodimer of LeuC and LeuD.

The enzyme catalyses (2R,3S)-3-isopropylmalate = (2S)-2-isopropylmalate. The protein operates within amino-acid biosynthesis; L-leucine biosynthesis; L-leucine from 3-methyl-2-oxobutanoate: step 2/4. In terms of biological role, catalyzes the isomerization between 2-isopropylmalate and 3-isopropylmalate, via the formation of 2-isopropylmaleate. The polypeptide is 3-isopropylmalate dehydratase small subunit (Campylobacter jejuni (strain RM1221)).